The sequence spans 509 residues: MNEQQRLASQQANSSKKKEEKDYSKYFESVYQPPSLKEAKKRGKEEVKIERDFGLPEEFRNFGTGRKFYIRTYGCQMNEHDTEVMAGIFTALGYEPTFSTEEADVVLLNTCAIRENAENKVFGELGHLKALKRRNPDLLIGVCGCMSQEESVVNKIMQKNQHVDMVFGTHNIHRLPYILKDAMFSKETVVEVWSKEGDVIENLPKVRRGDIKAWVNIMYGCDKFCTYCIVPYTRGKERSRRPEDIIQEIRHLAANGYKEITLLGQNVNAYGKDFEDIEYGLGDLMDELRKVDIARIRFTTSHPRDFDDHLIEVLGKGGNLVEHIHLPVQSGSTEMLKIMARKYSREHYLELVRKIKEAIPNAVLTTDIIVGFPNETDEQFEETMSLYREVGFDTAFTFIYSPREGTPAAKMKDNVPMEVKKERLQRLNALVNKLAIEKNNRYKGQIVEVLVDGESKNNPEVLAGYTRTNKLVNFVAPKSLIGQLVKVKVTDAKTWSLNGELVEEPIEVE.

Positions 1–13 are enriched in polar residues; sequence MNEQQRLASQQAN. Positions 1-26 are disordered; the sequence is MNEQQRLASQQANSSKKKEEKDYSKY. The span at 16–25 shows a compositional bias: basic and acidic residues; sequence KKKEEKDYSK. The 119-residue stretch at 66-184 folds into the MTTase N-terminal domain; the sequence is RKFYIRTYGC…LPYILKDAMF (119 aa). Cys75, Cys111, Cys145, Cys221, Cys225, and Cys228 together coordinate [4Fe-4S] cluster. Residues 207–437 enclose the Radical SAM core domain; that stretch reads RRGDIKAWVN…NALVNKLAIE (231 aa). The 64-residue stretch at 440 to 503 folds into the TRAM domain; the sequence is NRYKGQIVEV…TWSLNGELVE (64 aa).

The protein belongs to the methylthiotransferase family. MiaB subfamily. Monomer. [4Fe-4S] cluster serves as cofactor.

The protein localises to the cytoplasm. It catalyses the reaction N(6)-dimethylallyladenosine(37) in tRNA + (sulfur carrier)-SH + AH2 + 2 S-adenosyl-L-methionine = 2-methylsulfanyl-N(6)-dimethylallyladenosine(37) in tRNA + (sulfur carrier)-H + 5'-deoxyadenosine + L-methionine + A + S-adenosyl-L-homocysteine + 2 H(+). Catalyzes the methylthiolation of N6-(dimethylallyl)adenosine (i(6)A), leading to the formation of 2-methylthio-N6-(dimethylallyl)adenosine (ms(2)i(6)A) at position 37 in tRNAs that read codons beginning with uridine. The sequence is that of tRNA-2-methylthio-N(6)-dimethylallyladenosine synthase from Bacillus cereus (strain ATCC 10987 / NRS 248).